A 479-amino-acid chain; its full sequence is Ribosomal RNA small subunit methyltransferase F (479 aa).

Residues Ala125–Lys131, Glu149, Asp176, and Asp194 contribute to the S-adenosyl-L-methionine site. Cys247 functions as the Nucleophile in the catalytic mechanism.

It belongs to the class I-like SAM-binding methyltransferase superfamily. RsmB/NOP family.

The protein localises to the cytoplasm. The catalysed reaction is cytidine(1407) in 16S rRNA + S-adenosyl-L-methionine = 5-methylcytidine(1407) in 16S rRNA + S-adenosyl-L-homocysteine + H(+). Functionally, specifically methylates the cytosine at position 1407 (m5C1407) of 16S rRNA. The sequence is that of Ribosomal RNA small subunit methyltransferase F from Shigella dysenteriae serotype 1 (strain Sd197).